We begin with the raw amino-acid sequence, 130 residues long: Histone H2A.2 (130 aa).

An N6-acetyllysine mark is found at Lys-4 and Lys-6. Gln-104 is subject to N5-methylglutamine. Residue Lys-125 forms a Glycyl lysine isopeptide (Lys-Gly) (interchain with G-Cter in SUMO) linkage. Residue Ser-127 is modified to Phosphoserine. The [ST]-Q motif motif lies at 127–128 (SQ).

This sequence belongs to the histone H2A family. As to quaternary structure, the nucleosome is a histone octamer containing two molecules each of H2A, H2B, H3 and H4 assembled in one H3-H4 heterotetramer and two H2A-H2B heterodimers. The octamer wraps approximately 147 bp of DNA. Post-translationally, phosphorylated to form H2AS128ph (gamma-H2A) in response to DNA double-strand breaks (DSBs) generated by exogenous genotoxic agents and by stalled replication forks. Phosphorylation is dependent on the DNA damage checkpoint kinases MEC1/ATR and TEL1/ATM, spreads on either side of a detected DSB site and may mark the surrounding chromatin for recruitment of proteins required for DNA damage signaling and repair. Gamma-H2A is removed from the DNA prior to the strand invasion-primer extension step of the repair process and subsequently dephosphorylated. Dephosphorylation is necessary for efficient recovery from the DNA damage checkpoint. In terms of processing, acetylated by ESA1 to form H2AK4ac and H2AK7ac.

The protein localises to the nucleus. The protein resides in the chromosome. Functionally, core component of nucleosome which plays a central role in DNA double strand break (DSB) repair. Nucleosomes wrap and compact DNA into chromatin, limiting DNA accessibility to the cellular machineries which require DNA as a template. Histones thereby play a central role in transcription regulation, DNA repair, DNA replication and chromosomal stability. DNA accessibility is regulated via a complex set of post-translational modifications of histones, also called histone code, and nucleosome remodeling. The polypeptide is Histone H2A.2 (HTA2) (Meyerozyma guilliermondii (strain ATCC 6260 / CBS 566 / DSM 6381 / JCM 1539 / NBRC 10279 / NRRL Y-324) (Yeast)).